Consider the following 773-residue polypeptide: Mitochondrial inner membrane m-AAA protease component yta12 (773 aa).

The interval phenylalanine 83 to asparagine 119 is disordered. A compositionally biased stretch (low complexity) spans serine 87 to alanine 101. 2 helical membrane passes run valine 126–leucine 146 and valine 239–leucine 259. The ATP site is built by valine 298, alanine 299, threonine 340, glycine 341, lysine 342, threonine 343, leucine 344, and histidine 479. Histidine 561 lines the Zn(2+) pocket. The active site involves glutamate 562. Residues histidine 565 and aspartate 638 each contribute to the Zn(2+) site. Residues glutamate 752–alanine 773 form a disordered region. Residues asparagine 761–alanine 773 are compositionally biased toward pro residues.

This sequence in the N-terminal section; belongs to the AAA ATPase family. In the C-terminal section; belongs to the peptidase M41 family. Component of the m-AAA protease complex. Requires Zn(2+) as cofactor.

It is found in the mitochondrion membrane. The enzyme catalyses ATP + H2O = ADP + phosphate + H(+). Functionally, catalytic component of the m-AAA protease, a protease that plays a key role in proteostasis of inner mitochondrial membrane proteins. Possesses both ATPase and protease activities: the ATPase activity is required to unfold substrates, threading them into the internal proteolytic cavity for hydrolysis into small peptide fragments. The complex is necessary for the assembly of mitochondrial respiratory chain and ATPase complexes. The m-AAA protease carries out protein quality control in the inner membrane of the mitochondria by mediating degradation of mistranslated or misfolded polypeptides. It also mediates protein maturation of the mitochondrial ribosomal subunit mrpl32/bL32m by catalyzing the cleavage of the presequence of mrpl32/bL32m prior to assembly into the mitochondrial ribosome. Also acts as a membrane protein dislocase: required to dislocate moderately hydrophobic transmembrane segments from the membrane. The polypeptide is Mitochondrial inner membrane m-AAA protease component yta12 (yta12) (Schizosaccharomyces pombe (strain 972 / ATCC 24843) (Fission yeast)).